The primary structure comprises 632 residues: Probable extracellular metalloproteinase 2 (632 aa).

Positions Met1–Gly19 are cleaved as a signal peptide. A propeptide spanning residues Leu20–Ser244 is cleaved from the precursor. Residues Asn81 and Asn270 are each glycosylated (N-linked (GlcNAc...) asparagine). Position 429 (His429) interacts with Zn(2+). Residue Glu430 is part of the active site. Position 433 (His433) interacts with Zn(2+).

Belongs to the peptidase M36 family. It depends on Zn(2+) as a cofactor.

The protein localises to the secreted. In terms of biological role, secreted metalloproteinase probably acting as a virulence factor. This chain is Probable extracellular metalloproteinase 2 (MEP2), found in Arthroderma benhamiae (strain ATCC MYA-4681 / CBS 112371) (Trichophyton mentagrophytes).